Reading from the N-terminus, the 247-residue chain is 14-3-3 protein gamma (247 aa).

At methionine 1 the chain carries N-acetylmethionine; in 14-3-3 protein gamma; alternate; partial. At valine 2 the chain carries N-acetylvaline; in 14-3-3 protein gamma, N-terminally processed; partial. An N-acetylvaline; partial modification is found at valine 2. The tract at residues 2-166 is required for interaction with SPATA18/MIEAP (isoform 2) but dispensable for binding to SPATA18/MIEAP (isoform 1); the sequence is VDREQLVQKA…AHEISKEHMQ (165 aa). Residues 2 to 247 are interaction with SPATA18/MIEAP; it reads VDREQLVQKA…QDDDGGEGNN (246 aa). At serine 71 the chain carries Phosphoserine. Tyrosine 133 bears the Phosphotyrosine mark. Position 145 is a phosphothreonine (threonine 145). At serine 215 the chain carries Phosphoserine. A Phosphothreonine modification is found at threonine 234. Serine 235 is modified (phosphoserine).

This sequence belongs to the 14-3-3 family. Homodimer. Part of a complex that contains DSG3, PKP1, YAP1 and YWHAG; the complex is required for localization of DSG3 and YAP1 to the cell membrane in keratinocytes. Interacts with SAMSN1. Interacts with RAF1, SSH1 and CRTC2/TORC2. Interacts with ABL1 (phosphorylated form); the interaction retains it in the cytoplasm. Interacts with GAB2. Interacts with MDM4 (phosphorylated); negatively regulates MDM4 activity toward TP53. Interacts with PKA-phosphorylated AANAT and SIRT2. Interacts with the 'Thr-369' phosphorylated form of DAPK2. Interacts with PI4KB, TBC1D22A and TBC1D22B. Interacts with SLITRK1. Interacts with LRRK2; this interaction is dependent on LRRK2 phosphorylation. Interacts with MARK2 and MARK3. Interacts with MEFV. Interacts with ENDOG, TSC2 and PIK3C3; interaction with ENDOG weakens its interaction with TSC2 and PIK3C3. Interacts with (phosphorylated) WDR24. Interacts with BEST1; this interaction promotes L-glutamate channel activity leading to the positive regulation of NMDA glutamate receptor activity through the L-glutamate secretion. Interacts with PKP1 (when phosphorylated); the interaction results in translocation of PKP1 to the cytoplasm and loss of intercellular adhesion in keratinocytes. Interacts with SPATA18/MIEAP (isoforms 1 and 2); a protein that also plays a role in MALM. Phosphorylated by various PKC isozymes. Highly expressed in brain, skeletal muscle, and heart.

The protein resides in the cytoplasm. Its subcellular location is the cytosol. It is found in the mitochondrion matrix. Adapter protein implicated in the regulation of a large spectrum of both general and specialized signaling pathways. Binds to a large number of partners, usually by recognition of a phosphoserine or phosphothreonine motif. Binding generally results in the modulation of the activity of the binding partner. Promotes inactivation of WDR24 component of the GATOR2 complex by binding to phosphorylated WDR24. Participates in the positive regulation of NMDA glutamate receptor activity by promoting the L-glutamate secretion through interaction with BEST1. Reduces keratinocyte intercellular adhesion, via interacting with PKP1 and sequestering it in the cytoplasm, thereby reducing its incorporation into desmosomes. Plays a role in mitochondrial protein catabolic process (also named MALM) that promotes the degradation of damaged proteins inside mitochondria. In Homo sapiens (Human), this protein is 14-3-3 protein gamma.